Here is a 531-residue protein sequence, read N- to C-terminus: Probable rhamnogalacturonate lyase A (531 aa).

A signal peptide spans 1-20 (MLSKALFFSSLPLWAKVASA). 2 cysteine pairs are disulfide-bonded: cysteine 50–cysteine 93 and cysteine 184–cysteine 193. Asparagine 351 is a glycosylation site (N-linked (GlcNAc...) asparagine).

Belongs to the polysaccharide lyase 4 family.

The protein localises to the secreted. It catalyses the reaction Endotype eliminative cleavage of L-alpha-rhamnopyranosyl-(1-&gt;4)-alpha-D-galactopyranosyluronic acid bonds of rhamnogalacturonan I domains in ramified hairy regions of pectin leaving L-rhamnopyranose at the reducing end and 4-deoxy-4,5-unsaturated D-galactopyranosyluronic acid at the non-reducing end.. In terms of biological role, pectinolytic enzymes consist of four classes of enzymes: pectin lyase, polygalacturonase, pectin methylesterase and rhamnogalacturonase. Degrades the rhamnogalacturonan I (RG-I) backbone of pectin. The polypeptide is Probable rhamnogalacturonate lyase A (rglA) (Aspergillus terreus (strain NIH 2624 / FGSC A1156)).